Reading from the N-terminus, the 287-residue chain is Bifunctional protein FolD (287 aa).

Residues 160–162 (GRS), S189, and T230 each bind NADP(+).

The protein belongs to the tetrahydrofolate dehydrogenase/cyclohydrolase family. Homodimer.

It carries out the reaction (6R)-5,10-methylene-5,6,7,8-tetrahydrofolate + NADP(+) = (6R)-5,10-methenyltetrahydrofolate + NADPH. The catalysed reaction is (6R)-5,10-methenyltetrahydrofolate + H2O = (6R)-10-formyltetrahydrofolate + H(+). The protein operates within one-carbon metabolism; tetrahydrofolate interconversion. Its function is as follows. Catalyzes the oxidation of 5,10-methylenetetrahydrofolate to 5,10-methenyltetrahydrofolate and then the hydrolysis of 5,10-methenyltetrahydrofolate to 10-formyltetrahydrofolate. The protein is Bifunctional protein FolD of Chlamydia trachomatis serovar D (strain ATCC VR-885 / DSM 19411 / UW-3/Cx).